The following is a 569-amino-acid chain: Urease subunit alpha (569 aa).

Ni(2+)-binding residues include His-136, His-138, and Lys-219. Lys-219 bears the N6-carboxylysine mark. His-221 is a substrate binding site. Residues His-248 and His-274 each contribute to the Ni(2+) site. Catalysis depends on His-322, which acts as the Proton donor. Residue Asp-362 coordinates Ni(2+).

The protein belongs to the metallo-dependent hydrolases superfamily. Urease alpha subunit family. Heterotrimer of UreA (gamma), UreB (beta) and UreC (alpha) subunits. Three heterotrimers associate to form the active enzyme. The cofactor is Ni cation. Carboxylation allows a single lysine to coordinate two nickel ions.

It is found in the cytoplasm. The enzyme catalyses urea + 2 H2O + H(+) = hydrogencarbonate + 2 NH4(+). Its pathway is nitrogen metabolism; urea degradation; CO(2) and NH(3) from urea (urease route): step 1/1. In Dinoroseobacter shibae (strain DSM 16493 / NCIMB 14021 / DFL 12), this protein is Urease subunit alpha.